A 325-amino-acid chain; its full sequence is Probable WRKY transcription factor 11 (325 aa).

A DNA-binding region (WRKY) is located at residues 240–306; sequence KIADIPPDEY…YEGEHRHNQS (67 aa).

Belongs to the WRKY group II-d family. In young, mature and senescent leaves.

Its subcellular location is the nucleus. Transcription factor. Interacts specifically with the W box (5'-(T)TGAC[CT]-3'), a frequently occurring elicitor-responsive cis-acting element. Regulates rhizobacterium B.cereus AR156-induced systemic resistance (ISR) to P.syringae pv. tomato DC3000, probably by activating the jasmonic acid (JA)- signaling pathway. In Arabidopsis thaliana (Mouse-ear cress), this protein is Probable WRKY transcription factor 11 (WRKY11).